The primary structure comprises 855 residues: DNA mismatch repair protein MutS (855 aa).

Residue 613–620 (GPNMGGKS) participates in ATP binding. Residues 795 to 816 (ETTSLPHEVPSQQSGKPASPMQ) form a disordered region. Residues 796-816 (TTSLPHEVPSQQSGKPASPMQ) are compositionally biased toward polar residues.

The protein belongs to the DNA mismatch repair MutS family.

Its function is as follows. This protein is involved in the repair of mismatches in DNA. It is possible that it carries out the mismatch recognition step. This protein has a weak ATPase activity. This is DNA mismatch repair protein MutS from Pseudomonas paraeruginosa (strain DSM 24068 / PA7) (Pseudomonas aeruginosa (strain PA7)).